Consider the following 62-residue polypeptide: Alpha-conotoxin-like Qc1.2 (62 aa).

Residues 1–21 (MGMRMMFTVFLLVALATTVAS) form the signal peptide. A propeptide spanning residues 22–48 (FTLDRASNGRNAAADDKPSDWIALAIK) is cleaved from the precursor. The residue at position 49 (Q49) is a Pyrrolidone carboxylic acid. Disulfide bonds link C50–C56 and C51–C61.

Belongs to the conotoxin A superfamily. Expressed by the venom duct.

The protein localises to the secreted. Alpha-conotoxins bind to the nicotinic acetylcholine receptors (nAChR) and inhibit them. This synthetic peptide (10 uM) selectively, but weakly inhibits both rat neuronal alpha-3-beta-2/CHRNA3-CHRNB2 (63%) and alpha-3-beta-4/CHRNA3-CHRNB4 (37%) subtypes of nAChR. This is Alpha-conotoxin-like Qc1.2 from Conus quercinus (Oak cone).